A 457-amino-acid chain; its full sequence is tRNA modification GTPase MnmE (457 aa).

(6S)-5-formyl-5,6,7,8-tetrahydrofolate-binding residues include arginine 22, glutamate 86, and arginine 125. One can recognise a TrmE-type G domain in the interval 221-381; that stretch reads GLRAVLAGRP…LEAEVARVAG (161 aa). K(+) is bound at residue asparagine 231. GTP is bound by residues 231-236, 250-256, and 275-278; these read NVGKSS, TPIPGTT, and DTAG. Serine 235 serves as a coordination point for Mg(2+). K(+) contacts are provided by threonine 250, isoleucine 252, and threonine 255. Threonine 256 is a Mg(2+) binding site. Lysine 457 contacts (6S)-5-formyl-5,6,7,8-tetrahydrofolate.

The protein belongs to the TRAFAC class TrmE-Era-EngA-EngB-Septin-like GTPase superfamily. TrmE GTPase family. As to quaternary structure, homodimer. Heterotetramer of two MnmE and two MnmG subunits. It depends on K(+) as a cofactor.

Its subcellular location is the cytoplasm. Its function is as follows. Exhibits a very high intrinsic GTPase hydrolysis rate. Involved in the addition of a carboxymethylaminomethyl (cmnm) group at the wobble position (U34) of certain tRNAs, forming tRNA-cmnm(5)s(2)U34. The sequence is that of tRNA modification GTPase MnmE from Symbiobacterium thermophilum (strain DSM 24528 / JCM 14929 / IAM 14863 / T).